The following is a 1482-amino-acid chain: Cystic fibrosis transmembrane conductance regulator (1482 aa).

At 1–77 (MQRSPLEKAS…KLINALRRCF (77 aa)) the chain is on the cytoplasmic side. A helical transmembrane segment spans residues 78 to 98 (FWRFTFYGIILYLGEVTKAVQ). The ABC transmembrane type-1 1 domain maps to 81-365 (FTFYGIILYL…WAVQTWYDSL (285 aa)). The Extracellular segment spans residues 99-122 (PLLLGRIIASYDPDNKVERSIAIY). The chain crosses the membrane as a helical span at residues 123–146 (LAVGLCLLFVVRTLLLHPAIFGLH). The Cytoplasmic segment spans residues 147 to 195 (HIGMQMRIAMFSLIYKKTLKLSSRVLDKISIGQLVSLLSNNLNKFDEGL). The chain crosses the membrane as a helical span at residues 196 to 216 (ALAHFVWIAPLQVTLLMGLLW). Residues 217–222 (DLLQAS) are Extracellular-facing. The helical transmembrane segment at 223-243 (AFSGLGVLIILACFQAGFGRM) threads the bilayer. Topologically, residues 244–298 (MMKYRDQRAGKINERLVITSEMIENIQSVKAYCWEEALEKMIENFRQSELRLTRK) are cytoplasmic. Residues 299–319 (AAYVRYFNSSAFFFSGFFVVF) traverse the membrane as a helical segment. Residues 320–339 (LSVLPYALIKGIILRKIFTT) lie on the Extracellular side of the membrane. Residues 340–358 (ISFCIVLRMAVTRQFPWAV) form a helical membrane-spanning segment. Residues 359–859 (QTWYDSLGAI…YLRYITVHKR (501 aa)) are Cytoplasmic-facing. ATP contacts are provided by residues Trp-401, Ser-434, 458 to 465 (GSTGAGKT), and Gln-493. In terms of domain architecture, ABC transporter 1 spans 423–646 (NVDNSLFFSN…RPDFSSKLMG (224 aa)). Cys-524 carries S-palmitoyl cysteine lipidation. Residues Ser-549 and Ser-660 each carry the phosphoserine modification. Positions 654-832 (SAERRNSIIT…EEINEEDLKE (179 aa)) are disordered R region. Residue Ser-670 is modified to Phosphoserine; by PKA. Ser-686 carries the post-translational modification Phosphoserine. Lys-688 participates in a covalent cross-link: Glycyl lysine isopeptide (Lys-Gly) (interchain with G-Cter in ubiquitin). Ser-700 and Ser-712 each carry phosphoserine. Thr-717 carries the post-translational modification Phosphothreonine. 4 positions are modified to phosphoserine: Ser-737, Ser-768, Ser-796, and Ser-814. The chain crosses the membrane as a helical span at residues 860 to 880 (LIFVLIWCFVVFLIEVAASLV). An ABC transmembrane type-1 2 domain is found at 860–1156 (LIFVLIWCFV…AVNSSIDVDS (297 aa)). Over 881–919 (LLCLLSKVSPEDKGNTTKSANDSSAVIITSTSSFYFLYI) the chain is Extracellular. N-linked (GlcNAc...) asparagine glycans are attached at residues Asn-895 and Asn-901. A discontinuously helical transmembrane segment spans residues 920–940 (YVGVADTFLALGLFRGLPLVH). At 941–991 (TLITVSKILHHKMLHSVLQAPMSTLNTLKAGGILNRFSKDIAILDDLLPLT) the chain is on the cytoplasmic side. Residues 992-1012 (IFDFIQLLLIVIGAVAVVSIL) traverse the membrane as a helical segment. Residues 1013-1014 (KP) are Extracellular-facing. The helical transmembrane segment at 1015 to 1035 (YIFLATVPVIVAFVLLRAYFL) threads the bilayer. Residues 1036 to 1096 (HTSQQLKQLE…TANWFLYLST (61 aa)) lie on the Cytoplasmic side of the membrane. The chain crosses the membrane as a helical span at residues 1097–1117 (LRWFQMRIEMIFVIFFIAVTF). The Extracellular portion of the chain corresponds to 1118–1131 (ISILTTGEGEGTVG). The chain crosses the membrane as a helical span at residues 1132–1152 (IILTLAMNIMSTLQWAVNSSI). The Cytoplasmic portion of the chain corresponds to 1153–1482 (DVDSLMRSVS…TEEEVQDTRL (330 aa)). Residues 1212–1445 (MTVKDLTAKY…KSLFRQAISP (234 aa)) form the ABC transporter 2 domain. ATP is bound by residues Tyr-1221 and 1246-1253 (GRTGSGKS). Residues 1388 to 1482 (RTLKQAFADC…TEEEVQDTRL (95 aa)) are interaction with GORASP2. Cys-1397 is lipidated: S-palmitoyl cysteine. Position 1446 is a phosphoserine (Ser-1446). The interval 1450–1482 (KLFPHQNSGKHKSRSKITALKEETEEEVQDTRL) is disordered. The span at 1472 to 1482 (ETEEEVQDTRL) shows a compositional bias: acidic residues. The PDZ-binding motif lies at 1480 to 1482 (TRL).

This sequence belongs to the ABC transporter superfamily. ABCC family. CFTR transporter (TC 3.A.1.202) subfamily. In terms of assembly, monomer; does not require oligomerization for channel activity. May form oligomers in the membrane. Interacts with SLC26A3, SLC26A6 and NHERF1. Interacts with SHANK2. Interacts with MYO6. Interacts (via C-terminus) with GOPC (via PDZ domain); this promotes CFTR internalization and thereby decreases channel activity. Interacts with SLC4A7 through NHERF1. Found in a complex with MYO5B and RAB11A. Interacts with ANO1. Interacts with SLC26A8. Interacts with AHCYL1; the interaction increases CFTR activity. Interacts with CSE1L. The core-glycosylated form interacts with GORASP2 (via PDZ GRASP-type 1 domain) in respone to ER stress. Interacts with MARCHF2; the interaction leads to CFTR ubiqtuitination and degradation. Interacts with ADGRG2. Post-translationally, N-glycosylated. Phosphorylated; cAMP treatment promotes phosphorylation and activates the channel. Dephosphorylation decreases the ATPase activity (in vitro). Phosphorylation at PKA sites activates the channel. Phosphorylation at PKC sites enhances the response to phosphorylation by PKA. Phosphorylated by AMPK; this inhibits channel activity. In terms of processing, ubiquitinated, leading to its degradation in the lysosome. Deubiquitination by USP10 in early endosomes enhances its endocytic recycling to the cell membrane. Ubiquitinated by RNF185 during ER stress. Ubiquitinated by MARCHF2.

The protein resides in the apical cell membrane. Its subcellular location is the early endosome membrane. The protein localises to the cell membrane. It localises to the recycling endosome membrane. It is found in the endoplasmic reticulum membrane. The protein resides in the nucleus. It carries out the reaction ATP + H2O + closed Cl(-) channel = ADP + phosphate + open Cl(-) channel.. It catalyses the reaction chloride(in) = chloride(out). The catalysed reaction is hydrogencarbonate(in) = hydrogencarbonate(out). The enzyme catalyses ATP + H2O = ADP + phosphate + H(+). Epithelial ion channel that plays an important role in the regulation of epithelial ion and water transport and fluid homeostasis. Mediates the transport of chloride ions across the cell membrane. Possesses an intrinsic ATPase activity and utilizes ATP to gate its channel; the passive flow of anions through the channel is gated by cycles of ATP binding and hydrolysis by the ATP-binding domains. The ion channel is also permeable to HCO(3)(-); selectivity depends on the extracellular chloride concentration. Exerts its function also by modulating the activity of other ion channels and transporters. Contributes to the regulation of the pH and the ion content of the epithelial fluid layer. Modulates the activity of the epithelial sodium channel (ENaC) complex, in part by regulating the cell surface expression of the ENaC complex. May regulate bicarbonate secretion and salvage in epithelial cells by regulating the transporter SLC4A7. Can inhibit the chloride channel activity of ANO1. Plays a role in the chloride and bicarbonate homeostasis during sperm epididymal maturation and capacitation. The sequence is that of Cystic fibrosis transmembrane conductance regulator from Dasypus novemcinctus (Nine-banded armadillo).